The sequence spans 218 residues: Imidazole glycerol phosphate synthase subunit HisH (218 aa).

A Glutamine amidotransferase type-1 domain is found at 12–218 (SIVVVDYGLG…RNFVDYCADQ (207 aa)). The active-site Nucleophile is the Cys-88. Residues His-196 and Glu-198 contribute to the active site.

Heterodimer of HisH and HisF.

Its subcellular location is the cytoplasm. The catalysed reaction is 5-[(5-phospho-1-deoxy-D-ribulos-1-ylimino)methylamino]-1-(5-phospho-beta-D-ribosyl)imidazole-4-carboxamide + L-glutamine = D-erythro-1-(imidazol-4-yl)glycerol 3-phosphate + 5-amino-1-(5-phospho-beta-D-ribosyl)imidazole-4-carboxamide + L-glutamate + H(+). It carries out the reaction L-glutamine + H2O = L-glutamate + NH4(+). It functions in the pathway amino-acid biosynthesis; L-histidine biosynthesis; L-histidine from 5-phospho-alpha-D-ribose 1-diphosphate: step 5/9. IGPS catalyzes the conversion of PRFAR and glutamine to IGP, AICAR and glutamate. The HisH subunit catalyzes the hydrolysis of glutamine to glutamate and ammonia as part of the synthesis of IGP and AICAR. The resulting ammonia molecule is channeled to the active site of HisF. The polypeptide is Imidazole glycerol phosphate synthase subunit HisH (Halobacterium salinarum (strain ATCC 700922 / JCM 11081 / NRC-1) (Halobacterium halobium)).